We begin with the raw amino-acid sequence, 568 residues long: Urease subunit alpha (568 aa).

The 439-residue stretch at 130–568 (GGIDTHIHFI…LPMAQRYFLF (439 aa)) folds into the Urease domain. Residues His-135, His-137, and Lys-218 each coordinate Ni(2+). An N6-carboxylysine modification is found at Lys-218. Residue His-220 coordinates substrate. The Ni(2+) site is built by His-247 and His-273. His-321 functions as the Proton donor in the catalytic mechanism. Residue Asp-361 participates in Ni(2+) binding.

Belongs to the metallo-dependent hydrolases superfamily. Urease alpha subunit family. Heterotrimer of UreA (gamma), UreB (beta) and UreC (alpha) subunits. Three heterotrimers associate to form the active enzyme. Ni cation is required as a cofactor. Post-translationally, carboxylation allows a single lysine to coordinate two nickel ions.

The protein localises to the cytoplasm. The catalysed reaction is urea + 2 H2O + H(+) = hydrogencarbonate + 2 NH4(+). It participates in nitrogen metabolism; urea degradation; CO(2) and NH(3) from urea (urease route): step 1/1. This Burkholderia pseudomallei (strain K96243) protein is Urease subunit alpha.